Reading from the N-terminus, the 483-residue chain is Wax ester synthase/diacylglycerol acyltransferase 10 (483 aa).

The Cytoplasmic segment spans residues 1–203; that stretch reads MTKEEVEEEP…SINAVYYAVR (203 aa). Residue His-143 is the Proton acceptor of the active site. Residues 204–222 traverse the membrane as a helical segment; that stretch reads LIWNTIVDLLLLWATSLFF. Topologically, residues 223-483 are lumenal; it reads KDTETPISEG…MKDTLSGKSD (261 aa). N-linked (GlcNAc...) asparagine glycans are attached at residues Asn-394 and Asn-399.

In the N-terminal section; belongs to the long-chain O-acyltransferase family. Mostly expressed in roots.

The protein localises to the cell membrane. It localises to the endoplasmic reticulum membrane. The enzyme catalyses an acyl-CoA + a 1,2-diacyl-sn-glycerol = a triacyl-sn-glycerol + CoA. It carries out the reaction a long chain fatty alcohol + a fatty acyl-CoA = a wax ester + CoA. It functions in the pathway glycerolipid metabolism; triacylglycerol biosynthesis. The protein operates within lipid metabolism. Its function is as follows. Bifunctional wax ester synthase/diacylglycerol acyltransferase. Involved in cuticular wax biosynthesis. This chain is Wax ester synthase/diacylglycerol acyltransferase 10, found in Arabidopsis thaliana (Mouse-ear cress).